The sequence spans 68 residues: KDGYPMVRAGREKGCKIWCVINNESCDSECKIRKGKKGYCYFWKLACYCEGLPANEQVWTYEKNTCKP.

The LCN-type CS-alpha/beta domain maps to 1–67 (KDGYPMVRAG…VWTYEKNTCK (67 aa)). 4 cysteine pairs are disulfide-bonded: Cys15/Cys66, Cys19/Cys40, Cys26/Cys47, and Cys30/Cys49.

It belongs to the long (4 C-C) scorpion toxin superfamily. Sodium channel inhibitor family. Beta subfamily. As to expression, expressed by the venom gland.

The protein localises to the secreted. In terms of biological role, beta toxins bind voltage-independently at site-4 of sodium channels (Nav) and shift the voltage of activation toward more negative potentials thereby affecting sodium channel activation and promoting spontaneous and repetitive firing. Is toxic to both insect and mammals. Induces paralysis in Acheta domestica crickets, but does not induce death, whereas intracerebroventricular injection into mice causes immediate death (at a dose of 0.05 ug/g). This Isometrus maculatus (Lesser brown scorpion) protein is Beta-toxin Im-2.